Consider the following 182-residue polypeptide: Constitutive photomorphogenesis protein 10 (182 aa).

Residues 36–182 (ASGKRIQREM…AKEWTLRFAK (147 aa)) form the UBC core domain.

The protein belongs to the ubiquitin-conjugating enzyme family. As to quaternary structure, component of the CDD complex, at least composed of COP10, DET1 and DDB1A. Interacts with E3 ubiquitin ligase COP1. Interacts with E2 ubiquitin conjugating UBC5. Interacts with CSN3, CSN4 and CSN8 subunits of the COP9 complex. As to expression, expressed in flower, leaf, stem and seedling. Expressed at lower level in root.

It localises to the nucleus. Functionally, component of light signal transduction machinery. Involved in repression of photomorphogenesis in darkness by participating in the CDD complex, a complex probably required to regulate the activity of ubiquitin conjugating enzymes (E2s). Repression of photomorphogenesis is probably mediated by ubiquitination and subsequent degradation of photomorphogenesis-promoting factors such as HY5, HYH and LAF1. Although strongly related to ubiquitin-conjugating enzyme, it has no catalytic activity by itself due to the absence of the conserved Cys active site at position 120. It can however enhance the activity of E2 conjugating enzymes. This Arabidopsis thaliana (Mouse-ear cress) protein is Constitutive photomorphogenesis protein 10 (COP10).